A 537-amino-acid chain; its full sequence is Arginine--tRNA ligase (537 aa).

The 'HIGH' region signature appears at 113–123 (ANPTGELHLGH).

This sequence belongs to the class-I aminoacyl-tRNA synthetase family. As to quaternary structure, monomer.

The protein resides in the cytoplasm. The enzyme catalyses tRNA(Arg) + L-arginine + ATP = L-arginyl-tRNA(Arg) + AMP + diphosphate. This is Arginine--tRNA ligase (argS) from Mycoplasma pneumoniae (strain ATCC 29342 / M129 / Subtype 1) (Mycoplasmoides pneumoniae).